The chain runs to 457 residues: Argininosuccinate lyase (457 aa).

The protein belongs to the lyase 1 family. Argininosuccinate lyase subfamily.

It is found in the cytoplasm. The catalysed reaction is 2-(N(omega)-L-arginino)succinate = fumarate + L-arginine. It functions in the pathway amino-acid biosynthesis; L-arginine biosynthesis; L-arginine from L-ornithine and carbamoyl phosphate: step 3/3. The protein is Argininosuccinate lyase of Klebsiella pneumoniae subsp. pneumoniae (strain ATCC 700721 / MGH 78578).